The chain runs to 291 residues: Protein ZAR1-like (291 aa).

The interval 103-152 (GSQTLHSSSLSDRTSSRKPTEAWEVGRRALIRRPQDGEDEESQEELTGPT) is disordered. The span at 106-115 (TLHSSSLSDR) shows a compositional bias: low complexity. Over residues 116 to 129 (TSSRKPTEAWEVGR) the composition is skewed to basic and acidic residues. A 3CxxC-type zinc finger spans residues 195–280 (LKYGYFHCKD…QELCGHCKDK (86 aa)).

It belongs to the ZAR1 family. As to quaternary structure, interacts with YBX2. In terms of tissue distribution, expressed in oocytes and zygotes. Predominantly expressed in maturing oocytes before maternal-to-zygotic transition (MZT). Less abundant than Zar1.

It is found in the cytoplasm. The protein resides in the cytoplasmic ribonucleoprotein granule. MRNA-binding protein required for maternal mRNA storage, translation and degradation during oocyte maturation. Probably promotes formation of some phase-separated membraneless compartment that stores maternal mRNAs in oocytes: acts by undergoing liquid-liquid phase separation upon binding to maternal mRNAs. Binds to the 3'-UTR of maternal mRNAs, inhibiting their translation. This is Protein ZAR1-like from Mus musculus (Mouse).